A 102-amino-acid polypeptide reads, in one-letter code: UPF0235 protein Noc_3000 (102 aa).

It belongs to the UPF0235 family.

In Nitrosococcus oceani (strain ATCC 19707 / BCRC 17464 / JCM 30415 / NCIMB 11848 / C-107), this protein is UPF0235 protein Noc_3000.